Here is a 529-residue protein sequence, read N- to C-terminus: Peptide chain release factor 3 (529 aa).

Residues 11–280 (AKRRTFAIIS…GLVEWAPAPM (270 aa)) form the tr-type G domain. GTP is bound by residues 20–27 (SHPDAGKT), 88–92 (DTPGH), and 142–145 (NKLD).

This sequence belongs to the TRAFAC class translation factor GTPase superfamily. Classic translation factor GTPase family. PrfC subfamily.

It localises to the cytoplasm. Its function is as follows. Increases the formation of ribosomal termination complexes and stimulates activities of RF-1 and RF-2. It binds guanine nucleotides and has strong preference for UGA stop codons. It may interact directly with the ribosome. The stimulation of RF-1 and RF-2 is significantly reduced by GTP and GDP, but not by GMP. The sequence is that of Peptide chain release factor 3 from Yersinia pestis bv. Antiqua (strain Antiqua).